Here is an 873-residue protein sequence, read N- to C-terminus: Sine oculis-binding protein homolog (873 aa).

A compositionally biased stretch (basic and acidic residues) spans 1–14; sequence MAEMEKEGRPPENK. The tract at residues 1–26 is disordered; sequence MAEMEKEGRPPENKRSRKPAHPVKRE. FCS-type zinc fingers lie at residues 142–180 and 216–256; these read DDVSNVQIMCAWCQKVGIKRYSLSMGSEVKSFCSEKCFA and FKNN…KCLN. Disordered stretches follow at residues 308 to 339, 413 to 484, and 550 to 646; these read RRKAPSPVATAGQSQGPGPSASTTVSPSDTAN, RGPP…PGAP, and KPPN…PGVL. The span at 318–339 shows a compositional bias: polar residues; it reads AGQSQGPGPSASTTVSPSDTAN. Over residues 417 to 433 the composition is skewed to low complexity; sequence HHASNPNSPLSNPMLPG. The segment covering 460 to 484 has biased composition (pro residues); it reads IHPPSTPTMPGNPPGLLPPPPPGAP. Over residues 614-625 the composition is skewed to basic and acidic residues; the sequence is EHGRSEVVDLTR. The short motif at 620-624 is the SUMO interaction motif 1 (SIM); mediates the binding to polysumoylated substrates element; that stretch reads VVDLT. The residue at position 629 (Ser629) is a Phosphoserine. An SUMO interaction motif 2 (SIM); mediates the binding to polysumoylated substrates motif is present at residues 653-657; that stretch reads VIDLT. A Glycyl lysine isopeptide (Lys-Gly) (interchain with G-Cter in SUMO2) cross-link involves residue Lys677. The residue at position 699 (Ser699) is a Phosphoserine. The tract at residues 730–771 is disordered; it reads AAAEGAKSAEPPPEQPPPPPPPAPPKKLLSPEEPAVSELESV. Positions 739-754 are enriched in pro residues; the sequence is EPPPEQPPPPPPPAPP.

The protein belongs to the SOBP family. In terms of assembly, interacts (via SIM domains) with SUMO1 and SUMO2.

In terms of biological role, implicated in development of the cochlea. In Homo sapiens (Human), this protein is Sine oculis-binding protein homolog.